Reading from the N-terminus, the 389-residue chain is Diaminopimelate decarboxylase (389 aa).

The residue at position 58 (K58) is an N6-(pyridoxal phosphate)lysine. Pyridoxal 5'-phosphate is bound by residues G233 and 271–274; that span reads ELGR. The substrate site is built by R274, R310, Y314, E342, and Y370. Residue Y370 participates in pyridoxal 5'-phosphate binding.

Belongs to the Orn/Lys/Arg decarboxylase class-II family. LysA subfamily. Homodimer. It depends on pyridoxal 5'-phosphate as a cofactor.

It carries out the reaction meso-2,6-diaminopimelate + H(+) = L-lysine + CO2. It participates in amino-acid biosynthesis; L-lysine biosynthesis via DAP pathway; L-lysine from DL-2,6-diaminopimelate: step 1/1. Specifically catalyzes the decarboxylation of meso-diaminopimelate (meso-DAP) to L-lysine. The protein is Diaminopimelate decarboxylase of Francisella tularensis subsp. holarctica (strain LVS).